The sequence spans 133 residues: T-cell receptor beta chain V region 86T1 (133 aa).

The first 21 residues, 1–21, serve as a signal peptide directing secretion; the sequence is MSCRLLLYVSLCLVETALMNT. The interval 22-113 is v segment; sequence KITQSPRYLI…SAVYFCASSH (92 aa). N-linked (GlcNAc...) asparagine glycans are attached at residues Asn-36 and Asn-75. Cys-41 and Cys-109 are disulfide-bonded. The interval 114–133 is j segment; sequence GQGVSGNTLYFGEGSRLIVV.

The chain is T-cell receptor beta chain V region 86T1 from Mus musculus (Mouse).